Consider the following 317-residue polypeptide: MSGTNPGEADGGAADAVLIAGPTASGKSALALSLAERTGGIVINTDSMQVYRDLRIITARPTPDEEARVPHRLYGHVDADVNCSAGMWVADAAAALEEALAQNRLPIFAGGSGLYFKALTRGLSAVPPIPSQVRDDVRARLERDGAEALHAVLARRDPAAAQRLKPRDRARIARALEVVEATGRSLTDWHRDGLPPLLPPDKVRAIFLAPDREALYARIDARFGAMLAAGALEEVRALAERHLDPLLPAMKAHGVPALMRHLRGEISLEEAAEIGRADTRHYAKRQFTWFRHQLPEFRWTSPEEAEAQLSCVIPGPR.

An ATP-binding site is contributed by 21-28 (GPTASGKS). 23–28 (TASGKS) serves as a coordination point for substrate. The interaction with substrate tRNA stretch occupies residues 46–49 (DSMQ).

Belongs to the IPP transferase family. As to quaternary structure, monomer. The cofactor is Mg(2+).

The catalysed reaction is adenosine(37) in tRNA + dimethylallyl diphosphate = N(6)-dimethylallyladenosine(37) in tRNA + diphosphate. Catalyzes the transfer of a dimethylallyl group onto the adenine at position 37 in tRNAs that read codons beginning with uridine, leading to the formation of N6-(dimethylallyl)adenosine (i(6)A). This chain is tRNA dimethylallyltransferase, found in Nitrobacter hamburgensis (strain DSM 10229 / NCIMB 13809 / X14).